Here is a 473-residue protein sequence, read N- to C-terminus: Cytochrome P450 716A2 (473 aa).

A helical membrane pass occupies residues 1–21; it reads MYLTIIFLFISSIIFPLLFFL. Residue cysteine 420 coordinates heme.

Belongs to the cytochrome P450 family. Requires heme as cofactor.

It is found in the membrane. Possesses triterpene oxidizing activity. Catalyzes the C28 hydroxylation of alpha-amyrin, beta-amyrin, and lupeol, producing uvaol, erythrodiol, and betulin, respectively. Catalyzes the C28 carboxylation of alpha- and beta-amyrin. Possesses 22alpha-hydroxylation activity against alpha- and beta-amaryn. The sequence is that of Cytochrome P450 716A2 from Arabidopsis thaliana (Mouse-ear cress).